Reading from the N-terminus, the 532-residue chain is Tyrosine-protein kinase Src-1 (532 aa).

The disordered stretch occupies residues 1–52; that stretch reads MGATKSKPREGGPRSRSLDIVEGSHQPFTSLSASQTPNKSLDSHRPPAQPFG. Residue Gly-2 is the site of N-myristoyl glycine attachment. Over residues 7–19 the composition is skewed to basic and acidic residues; sequence KPREGGPRSRSLD. Positions 26–40 are enriched in polar residues; that stretch reads QPFTSLSASQTPNKS. One can recognise an SH3 domain in the interval 80 to 141; it reads GGVTTFVALY…PSNYVAPSDS (62 aa). Residues 147-244 form the SH2 domain; the sequence is WYLGKITRRE…GLCHRLTTVC (98 aa). Positions 266–519 constitute a Protein kinase domain; the sequence is LRLELKLGQG…YLQAFLEDYF (254 aa). ATP contacts are provided by residues 272–280 and Lys-294; that span reads LGQGCFGEV. Asp-385 (proton acceptor) is an active-site residue. Tyr-415 is modified (phosphotyrosine; by autocatalysis).

This sequence belongs to the protein kinase superfamily. Tyr protein kinase family. SRC subfamily.

Its subcellular location is the cell membrane. It carries out the reaction L-tyrosyl-[protein] + ATP = O-phospho-L-tyrosyl-[protein] + ADP + H(+). The polypeptide is Tyrosine-protein kinase Src-1 (src-a) (Xenopus laevis (African clawed frog)).